Here is a 214-residue protein sequence, read N- to C-terminus: UPF0758 protein (214 aa).

One can recognise an MPN domain in the interval 92 to 214 (VLSSWQALLD…ELSFRAEGLL (123 aa)). Positions 163, 165, and 176 each coordinate Zn(2+). The short motif at 163–176 (HNHPSGDPTPSQAD) is the JAMM motif element.

Belongs to the UPF0758 family.

This is UPF0758 protein from Rhodobacter capsulatus (Rhodopseudomonas capsulata).